Reading from the N-terminus, the 96-residue chain is ATP-dependent Clp protease adapter protein ClpS (96 aa).

It belongs to the ClpS family. Binds to the N-terminal domain of the chaperone ClpA.

Its function is as follows. Involved in the modulation of the specificity of the ClpAP-mediated ATP-dependent protein degradation. The sequence is that of ATP-dependent Clp protease adapter protein ClpS from Streptomyces coelicolor (strain ATCC BAA-471 / A3(2) / M145).